The following is a 229-amino-acid chain: Translation initiation factor 6 (229 aa).

This sequence belongs to the eIF-6 family.

Its function is as follows. Binds to the 50S ribosomal subunit and prevents its association with the 30S ribosomal subunit to form the 70S initiation complex. The polypeptide is Translation initiation factor 6 (Thermococcus kodakarensis (strain ATCC BAA-918 / JCM 12380 / KOD1) (Pyrococcus kodakaraensis (strain KOD1))).